A 168-amino-acid chain; its full sequence is Transcriptional repressor NrdR (168 aa).

A zinc finger spans residues cysteine 3–cysteine 34. The ATP-cone domain maps to proline 49–glutamate 139.

This sequence belongs to the NrdR family. Zn(2+) serves as cofactor.

Functionally, negatively regulates transcription of bacterial ribonucleotide reductase nrd genes and operons by binding to NrdR-boxes. This chain is Transcriptional repressor NrdR, found in Myxococcus xanthus (strain DK1622).